Here is a 598-residue protein sequence, read N- to C-terminus: Transcription factor COE3 (598 aa).

Residues 1-23 form a disordered region; that stretch reads MFGIQENIPRGGTTMKEEPLGGG. The tract at residues 63–66 is interaction with DNA; the sequence is RKSN. The segment at 151-170 adopts a C5-type zinc-finger fold; that stretch reads CRVLLTHEIMCSRCCDKKSC. Interaction with DNA regions lie at residues 197-204 and 236-239; these read NCLKNAGN and NNSK. One can recognise an IPT/TIG domain in the interval 264-347; it reads PCIKAISPSE…KGAPGRFVYT (84 aa). Positions 452–483 are disordered; the sequence is TSQANDQVGYSRNTSSVSPRGYVPSSTPQQSN.

Belongs to the COE family. Forms either a homodimer or a heterodimer with a related family member.

The protein localises to the nucleus. Acts as a transcriptional activator. The polypeptide is Transcription factor COE3 (coe3) (Xenopus laevis (African clawed frog)).